Here is a 1104-residue protein sequence, read N- to C-terminus: Reverse gyrase (1104 aa).

The segment at 1-39 (MAVNSKYHHSCINCGGLNTDERNERGLPCEVCLPEDSPS) adopts an RG N-terminal-type zinc-finger fold. The Zn(2+) site is built by cysteine 11, cysteine 14, cysteine 29, and cysteine 32. Residues phenylalanine 75, aspartate 78, glutamine 83, glycine 103, glycine 105, lysine 106, threonine 107, and threonine 108 each coordinate ADP. Residues glutamine 83 and 100-107 (APTGVGKT) contribute to the ATP site. The Helicase ATP-binding domain maps to 87–242 (AKRIVQGKSF…FSTIKQGKIY (156 aa)). Positions 203-206 (DDVD) match the DEAD box motif. Residues 223–250 (GIPEEIIRKAFSTIKQGKIYERPKNLKP) form an insert region region. The region spanning 300-522 (KLVELLEIFR…EAEANWKELV (223 aa)) is the Helicase C-terminal domain. The latch region stretch occupies residues 390–460 (RFSLELDKAP…KDEDLELIIP (71 aa)). Residues 538-1104 (DTSRSLLIIV…EEIKSLMEEG (567 aa)) form a topoisomerase I region. The Toprim domain maps to 542–699 (SLLIIVESPT…SLRRIEMHEI (158 aa)). Glutamate 548 contacts Mg(2+). The RG C-terminal-type zinc-finger motif lies at 618–645 (LKRCRDCGYQFTEDRDECPVCSSKNIDD). Zn(2+) contacts are provided by cysteine 621, cysteine 624, cysteine 635, and cysteine 638. A Mg(2+)-binding site is contributed by aspartate 668. The Topo IA-type catalytic domain occupies 715 to 1101 (DFNLVKAQIV…LLYEEIKSLM (387 aa)). Tyrosine 851 acts as the O-(5'-phospho-DNA)-tyrosine intermediate in catalysis.

This sequence in the N-terminal section; belongs to the DEAD box helicase family. DDVD subfamily. In the C-terminal section; belongs to the type IA topoisomerase family. Monomer. Zn(2+) serves as cofactor. Requires Mg(2+) as cofactor.

The protein resides in the cytoplasm. The enzyme catalyses ATP + H2O = ADP + phosphate + H(+). Functionally, modifies the topological state of DNA by introducing positive supercoils in an ATP-dependent process. Increases the linking number in steps of +1. Probably recognizes regions with a low GC content which melt and form a ssDNA bubble, allowing the enzyme to bind and cleave the DNA prior to strand passage; the bubble is probably cleaved by 2 reverse gyrase molecules, one on each strand. Positively supercoils DNA with all NTPS, although it strongly prefers ATP. In the presence of non-hydrolyzable ATP analogs it partially relaxes negative supercoils. Has an intrinsic ATPase activity that is stimulated by DNA; ssDNA is most effective. Binds to single-stranded DNA, transiently cleaves and then rejoins the ends, introducing a positive supercoil in the process. The scissile phosphodiester is attacked by the catalytic tyrosine of the enzyme, resulting in the formation of a DNA-(5'-phosphotyrosyl)-enzyme intermediate. The helicase-like domain is a nucleotide-dependent switch that alternates between a physically closed ATP-bound state with a slight preference for dsDNA, and an open ADP-bound state with a high preference for ssDNA. Whole enzyme has a very poor (k-unwind=0.001 sec(-1)) non-processive helicase activity in the 3'-5' direction that works on short substrates, while the isolated helicase domain has a slightly better helicase activity that works in both directions. Probably involved in rewinding DNA strands in regions of the chromosome that have opened up to allow replication, transcription, DNA repair and/or for DNA protection. The chain is Reverse gyrase from Thermotoga maritima (strain ATCC 43589 / DSM 3109 / JCM 10099 / NBRC 100826 / MSB8).